Reading from the N-terminus, the 473-residue chain is MVNLVIVSHSAMLGEGVEMLARQMLTGDNCRIAVAAGIDDPDHPIGTDPIKVMEAIEAVADTDHVLVMMDMGSALLSAETALDLLDPVIAEKVRLCAAPLVEGTLAATVSAAAGADIDTVIDVAMNALAAKQAQLGITPPAHAASLPAQAPDSDARSVTVTIRNHHGLHVRPASRLVAALAGMNADLVLEKQGQCVKPDSLNQIALLQVRCHDAVTLSASGPDAERALAAFESLAAEDFGEHPESMALKTSASTVEKVQGKAVFYPLPLAQPARHPCSDVGQEERRLQQAIVDTLNDLNALAALAEKKYGASVAAIFSGHYTLLDDPDLFDAACKVIRNDSCCAESAWYQVLMELSQQYQHLDDAYLQARFIDIEDILYRSLCHLKGRDIRLPTPDVPAIIVADDIFPSAVVNLNAQLVKGICLREGSTLSHAAIIAQQAGIAFICQQGAVLDIIQPEDRLLIDPAAQRVSCA.

The PTS EIIA type-4 domain occupies methionine 1–isoleucine 137. Histidine 9 (tele-phosphohistidine intermediate) is an active-site residue. In terms of domain architecture, HPr spans alanine 155–histidine 242. Histidine 169 (pros-phosphohistidine intermediate) is an active-site residue. Positions proline 266–cysteine 472 are PTS EI-like, N-terminal part. Histidine 432 functions as the Tele-phosphohistidine intermediate in the catalytic mechanism.

This sequence belongs to the PEP-utilizing enzyme family. In terms of assembly, homodimer. The dihydroxyacetone kinase complex is composed of a homodimer of DhaM, a homodimer of DhaK and the subunit DhaL.

It carries out the reaction dihydroxyacetone + phosphoenolpyruvate = dihydroxyacetone phosphate + pyruvate. Component of the dihydroxyacetone kinase complex, which is responsible for the phosphoenolpyruvate (PEP)-dependent phosphorylation of dihydroxyacetone. DhaM serves as the phosphoryl donor. Is phosphorylated by phosphoenolpyruvate in an EI- and HPr-dependent reaction, and a phosphorelay system on histidine residues finally leads to phosphoryl transfer to DhaL and dihydroxyacetone. The sequence is that of PEP-dependent dihydroxyacetone kinase, phosphoryl donor subunit DhaM from Pantoea ananatis (strain LMG 20103).